The following is a 578-amino-acid chain: Hyaluronan synthase 1 (578 aa).

Topologically, residues methionine 1–threonine 25 are cytoplasmic. A helical transmembrane segment spans residues isoleucine 26–leucine 46. Residues alanine 47–glycine 52 lie on the Extracellular side of the membrane. Residues leucine 53–phenylalanine 73 traverse the membrane as a helical segment. Over alanine 74 to alanine 399 the chain is Cytoplasmic. Residues tryptophan 400–leucine 420 traverse the membrane as a helical segment. The Extracellular segment spans residues arginine 421 to alanine 430. The chain crosses the membrane as a helical span at residues leucine 431–tryptophan 451. The Cytoplasmic portion of the chain corresponds to leucine 452–arginine 457. Residues methionine 458–leucine 478 traverse the membrane as a helical segment. Residues alanine 479–alanine 497 are Extracellular-facing. Residues alanine 498 to valine 518 form a helical membrane-spanning segment. Residues arginine 519–histidine 540 lie on the Cytoplasmic side of the membrane. Residues leucine 541 to valine 561 form a helical membrane-spanning segment. The Extracellular segment spans residues glycine 562 to valine 578.

The protein belongs to the NodC/HAS family. It depends on Mg(2+) as a cofactor. Widely expressed. Highly expressed in ovary followed by spleen, thymus, prostate, testes and large intestine. Weakly expressed in small intestine.

It is found in the membrane. The catalysed reaction is [hyaluronan](n) + UDP-N-acetyl-alpha-D-glucosamine = N-acetyl-beta-D-glucosaminyl-(1-&gt;4)-[hyaluronan](n) + UDP + H(+). It catalyses the reaction N-acetyl-beta-D-glucosaminyl-(1-&gt;4)-[hyaluronan](n) + UDP-alpha-D-glucuronate = [hyaluronan](n+1) + UDP + H(+). It functions in the pathway glycan biosynthesis; hyaluronan biosynthesis. Catalyzes the addition of GlcNAc or GlcUA monosaccharides to the nascent hyaluronan polymer. Therefore, it is essential to hyaluronan synthesis a major component of most extracellular matrices that has a structural role in tissues architectures and regulates cell adhesion, migration and differentiation. This is one of the isozymes catalyzing that reaction. Also able to catalyze the synthesis of chito-oligosaccharide depending on the substrate. The polypeptide is Hyaluronan synthase 1 (HAS1) (Homo sapiens (Human)).